The primary structure comprises 274 residues: D-aminopeptidase (274 aa).

The Zn(2+) site is built by aspartate 8, glutamate 10, histidine 60, and histidine 104. The active-site Nucleophile is the histidine 115. A Zn(2+)-binding site is contributed by glutamate 133.

Belongs to the peptidase M55 family. As to quaternary structure, homodecamer. A 20 Angstroms wide channel runs through the complex, giving access to a central chamber holding the active sites. Requires Zn(2+) as cofactor.

Its function is as follows. Hydrolyzes N-terminal residues in D-amino acid containing peptides. Among the tested substrates, the highest activities are with D-Ala-D-Ala and D-Ala-Gly-Gly. The physiological role is not clear. The sequence is that of D-aminopeptidase (dppA) from Bacillus subtilis (strain 168).